Consider the following 336-residue polypeptide: Glyceraldehyde-3-phosphate dehydrogenase (336 aa).

Residues 12–13 (RI), aspartate 34, arginine 78, and threonine 121 each bind NAD(+). D-glyceraldehyde 3-phosphate contacts are provided by residues 151–153 (SCT), threonine 182, arginine 199, 212–213 (TG), and arginine 235. The active-site Nucleophile is cysteine 152. NAD(+) is bound at residue asparagine 316.

This sequence belongs to the glyceraldehyde-3-phosphate dehydrogenase family. In terms of assembly, homotetramer.

Its subcellular location is the cytoplasm. It carries out the reaction D-glyceraldehyde 3-phosphate + phosphate + NAD(+) = (2R)-3-phospho-glyceroyl phosphate + NADH + H(+). It functions in the pathway carbohydrate degradation; glycolysis; pyruvate from D-glyceraldehyde 3-phosphate: step 1/5. Functionally, also binds human plasminogen. Its function is as follows. Catalyzes the oxidative phosphorylation of glyceraldehyde 3-phosphate (G3P) to 1,3-bisphosphoglycerate (BPG) using the cofactor NAD. The first reaction step involves the formation of a hemiacetal intermediate between G3P and a cysteine residue, and this hemiacetal intermediate is then oxidized to a thioester, with concomitant reduction of NAD to NADH. The reduced NADH is then exchanged with the second NAD, and the thioester is attacked by a nucleophilic inorganic phosphate to produce BPG. The protein is Glyceraldehyde-3-phosphate dehydrogenase (gap) of Streptococcus pyogenes.